Reading from the N-terminus, the 303-residue chain is E3 ubiquitin-protein ligase SINA-like 3 (303 aa).

The segment at 1-30 (MENITNNSERSLDRPKRQRPVSMENVGGTA) is disordered. Residues 49-85 (CPICYHKLGAPIYQCDNGHIACSSCCKKVKYKCPYCS) form an RING-type zinc finger. The interval 99–286 (IVEAVVVSCP…MSIPYYLLDE (188 aa)) is SBD. The SIAH-type zinc finger occupies 102 to 162 (AVVVSCPNAK…LYRHYHAEHK (61 aa)). Positions 107, 114, 128, 132, 139, 144, 156, and 161 each coordinate Zn(2+).

The protein belongs to the SINA (Seven in absentia) family.

It carries out the reaction S-ubiquitinyl-[E2 ubiquitin-conjugating enzyme]-L-cysteine + [acceptor protein]-L-lysine = [E2 ubiquitin-conjugating enzyme]-L-cysteine + N(6)-ubiquitinyl-[acceptor protein]-L-lysine.. It functions in the pathway protein modification; protein ubiquitination. E3 ubiquitin-protein ligase that mediates ubiquitination and subsequent proteasomal degradation of target proteins. E3 ubiquitin ligases accept ubiquitin from an E2 ubiquitin-conjugating enzyme in the form of a thioester and then directly transfers the ubiquitin to targeted substrates. It probably triggers the ubiquitin-mediated degradation of different substrates. This chain is E3 ubiquitin-protein ligase SINA-like 3, found in Arabidopsis thaliana (Mouse-ear cress).